The chain runs to 100 residues: Large ribosomal subunit protein uL23 (100 aa).

This sequence belongs to the universal ribosomal protein uL23 family. As to quaternary structure, part of the 50S ribosomal subunit. Contacts protein L29, and trigger factor when it is bound to the ribosome.

One of the early assembly proteins it binds 23S rRNA. One of the proteins that surrounds the polypeptide exit tunnel on the outside of the ribosome. Forms the main docking site for trigger factor binding to the ribosome. This is Large ribosomal subunit protein uL23 from Lactobacillus acidophilus (strain ATCC 700396 / NCK56 / N2 / NCFM).